Here is a 400-residue protein sequence, read N- to C-terminus: 2-[(L-alanin-3-ylcarbamoyl)methyl]-2-hydroxybutanedioate decarboxylase (400 aa).

N6-(pyridoxal phosphate)lysine is present on lysine 50. Residues glycine 228 and 266 to 269 (ECGR) each bind pyridoxal 5'-phosphate. The active-site Proton donor is the cysteine 344. Tyrosine 373 is a binding site for pyridoxal 5'-phosphate.

It belongs to the Orn/Lys/Arg decarboxylase class-II family. In terms of assembly, homodimer. Requires pyridoxal 5'-phosphate as cofactor.

The catalysed reaction is 2-[(L-alanin-3-ylcarbamoyl)methyl]-2-hydroxybutanedioate + H(+) = 2-[(2-aminoethylcarbamoyl)methyl]-2-hydroxybutanedioate + CO2. The protein operates within siderophore biosynthesis. Catalyzes the decarboxylation of citryl-L-2,3-diaminopropionic acid to citryl-diaminoethane, the second step in staphyloferrin B biosynthesis. In Staphylococcus aureus (strain NCTC 8325 / PS 47), this protein is 2-[(L-alanin-3-ylcarbamoyl)methyl]-2-hydroxybutanedioate decarboxylase.